The following is a 426-amino-acid chain: Fc receptor-like B (426 aa).

An N-terminal signal peptide occupies residues 1-17 (MWPLTALLLLVPSSGQA). 2 consecutive Ig-like C2-type domains span residues 23–101 (PILS…LSVS) and 103–189 (DWLI…VAVT). 2 cysteine pairs are disulfide-bonded: cysteine 44/cysteine 85 and cysteine 124/cysteine 168. N-linked (GlcNAc...) asparagine glycosylation occurs at asparagine 152. Residues 400–426 (ELRGTPETPTSHFAVSPGTPETTPVES) are disordered. The span at 406-426 (ETPTSHFAVSPGTPETTPVES) shows a compositional bias: polar residues.

As to expression, expressed at low levels. Expressed in B-lymphocytes. Detected in tonsil, lung, kidney, spleen and placenta. Expressed by a small subset of germinal center B-cells in tonsils and by melanocytes (at protein level).

It localises to the cytoplasm. Its subcellular location is the endoplasmic reticulum. The chain is Fc receptor-like B (FCRLB) from Homo sapiens (Human).